The primary structure comprises 202 residues: Small ribosomal subunit protein uS4 (202 aa).

The span at 1–13 (MSRYRGPRLRVTR) shows a compositional bias: basic residues. A disordered region spans residues 1–42 (MSRYRGPRLRVTRRLGELPGLTRKASKKSNPPGQHGQARRKR). Residues 90–152 (NRLDNVCFRL…KASKKLVEGN (63 aa)) enclose the S4 RNA-binding domain.

It belongs to the universal ribosomal protein uS4 family. In terms of assembly, part of the 30S ribosomal subunit. Contacts protein S5. The interaction surface between S4 and S5 is involved in control of translational fidelity.

One of the primary rRNA binding proteins, it binds directly to 16S rRNA where it nucleates assembly of the body of the 30S subunit. Its function is as follows. With S5 and S12 plays an important role in translational accuracy. The protein is Small ribosomal subunit protein uS4 of Prochlorococcus marinus (strain MIT 9515).